Reading from the N-terminus, the 231-residue chain is Transcriptional regulator NRG1 (231 aa).

Residue Ser163 is modified to Phosphoserine. 2 C2H2-type zinc fingers span residues Tyr174–His196 and His202–His226.

It localises to the nucleus. Transcriptional repressor involved in regulation of glucose repression. Binds to UAS-1 in the STA1 promoter. This chain is Transcriptional regulator NRG1 (NRG1), found in Saccharomyces cerevisiae (strain ATCC 204508 / S288c) (Baker's yeast).